A 1933-amino-acid polypeptide reads, in one-letter code: WD repeat-containing protein 81 (1933 aa).

The tract at residues 1–643 (MAQGSRRRKV…TPCESGWTRE (643 aa)) is necessary and sufficient for the interaction with SQSTM1. 6 disordered regions span residues 305–334 (PSED…RPGC), 663–714 (SIPG…GKIV), 1038–1057 (CAFG…SGLG), 1090–1209 (QPQE…EGKE), 1517–1544 (SLRN…SCLQ), and 1565–1590 (DSQP…SRNE). Residues 314–330 (SEEKDRTGVKSEKDGEG) show a composition bias toward basic and acidic residues. In terms of domain architecture, BEACH spans 333-610 (GCPTCQKELR…IPRLLVQPIQ (278 aa)). A compositionally biased stretch (low complexity) spans 668–693 (AGDQPGSSSSQASPGLLPFSAPSGSR). Polar residues-rich tracts occupy residues 1100–1112 (GQLS…SEAS) and 1131–1140 (VKSGDSSQDL). Residues 1145–1166 (GSEEEEEEEEGCVVLEEEEQDE) show a composition bias toward acidic residues. WD repeat units follow at residues 1638 to 1677 (GHTG…DGTS), 1684 to 1724 (IYAQ…TLRT), 1776 to 1815 (LNPG…VLRG), 1818 to 1856 (AHEG…PTHH), and 1903 to 1933 (NFRG…RLLA).

It belongs to the WD repeat WDR81 family. In terms of assembly, interacts with WDR91; involved in early to late endosome cargo transport. Interacts with BECN1; negatively regulates the PI3 kinase/PI3K activity associated with endosomal membranes. Interacts with SQSTM1; the interaction is direct and regulates the interaction of SQSTM1 with ubiquitinated proteins. Interacts with MAP1LC3C; recruits MAP1LC3C to ubiquitinated protein aggregates in the aggrephagy process.

It is found in the early endosome membrane. Its subcellular location is the late endosome membrane. The protein resides in the lysosome membrane. It localises to the cytoplasmic vesicle. The protein localises to the autophagosome membrane. It is found in the mitochondrion. Its subcellular location is the cytoplasm. The protein resides in the cytosol. In terms of biological role, functions as a negative regulator of the PI3 kinase/PI3K activity associated with endosomal membranes via BECN1, a core subunit of the PI3K complex. By modifying the phosphatidylinositol 3-phosphate/PtdInsP3 content of endosomal membranes may regulate endosome fusion, recycling, sorting and early to late endosome transport. It is for instance, required for the delivery of cargos like BST2/tetherin from early to late endosome and thereby participates indirectly to their degradation by the lysosome. May also play a role in aggrephagy, the macroautophagic degradation of ubiquitinated protein aggregates. In this process, may regulate the interaction of SQSTM1 with ubiquitinated proteins and also recruit MAP1LC3C. May also be involved in maintenance of normal mitochondrial structure and organization. The sequence is that of WD repeat-containing protein 81 from Rattus norvegicus (Rat).